Consider the following 310-residue polypeptide: Probable manganese-dependent inorganic pyrophosphatase (310 aa).

Mn(2+)-binding residues include histidine 9, aspartate 13, aspartate 15, aspartate 75, histidine 97, and aspartate 149.

It belongs to the PPase class C family. Mn(2+) is required as a cofactor.

It localises to the cytoplasm. It catalyses the reaction diphosphate + H2O = 2 phosphate + H(+). This is Probable manganese-dependent inorganic pyrophosphatase from Bacillus cytotoxicus (strain DSM 22905 / CIP 110041 / 391-98 / NVH 391-98).